The primary structure comprises 775 residues: Coiled-coil domain-containing protein 33 (775 aa).

2 disordered regions span residues 1–23 and 68–87; these read MGRQKTKVPEEPQDRLDTSLDPY and EANNHSPQARTSVTSEPTRA. Residues 7–18 are compositionally biased toward basic and acidic residues; the sequence is KVPEEPQDRLDT. In terms of domain architecture, C2 spans 12–141; sequence PQDRLDTSLD…RAFHPYHFEL (130 aa). The segment covering 71 to 84 has biased composition (polar residues); that stretch reads NHSPQARTSVTSEP. Coiled coils occupy residues 414-561 and 672-715; these read VEMN…ERKE and DKFS…LQEQ. The segment at 735 to 775 is disordered; that stretch reads RSQGSTTPRQNLKDEGYPGNIERPLQTHLTPGTRDIRHHLR.

This is Coiled-coil domain-containing protein 33 (Ccdc33) from Rattus norvegicus (Rat).